We begin with the raw amino-acid sequence, 380 residues long: Set1 complex component swd3 (380 aa).

7 WD repeats span residues 52–91 (GHEK…LECT), 94–133 (GHYR…SVRC), 136–177 (GHTN…RMLP), 179–219 (HSEP…KTLV), 221–262 (PINV…RIFD), 291–330 (NDSS…IIDD), and 335–374 (SDDP…SKHE). A Phosphoserine modification is found at S379.

Component of the Set1 complex composed of ash2, sdc1, set1, shg1, spp1, swd1, swd2 and swd3.

It localises to the nucleus. In terms of biological role, the Set1 complex specifically methylates 'Lys-4' of histone H3. This chain is Set1 complex component swd3, found in Schizosaccharomyces pombe (strain 972 / ATCC 24843) (Fission yeast).